A 125-amino-acid chain; its full sequence is Ribosome-binding factor A (125 aa).

Belongs to the RbfA family. As to quaternary structure, monomer. Binds 30S ribosomal subunits, but not 50S ribosomal subunits or 70S ribosomes.

The protein localises to the cytoplasm. One of several proteins that assist in the late maturation steps of the functional core of the 30S ribosomal subunit. Associates with free 30S ribosomal subunits (but not with 30S subunits that are part of 70S ribosomes or polysomes). Required for efficient processing of 16S rRNA. May interact with the 5'-terminal helix region of 16S rRNA. In Carboxydothermus hydrogenoformans (strain ATCC BAA-161 / DSM 6008 / Z-2901), this protein is Ribosome-binding factor A.